Here is a 338-residue protein sequence, read N- to C-terminus: Ribosomal RNA small subunit methyltransferase H (338 aa).

S-adenosyl-L-methionine is bound by residues 46–48 (GGY), aspartate 63, phenylalanine 90, aspartate 106, and glutamine 113.

It belongs to the methyltransferase superfamily. RsmH family.

The protein resides in the cytoplasm. The enzyme catalyses cytidine(1402) in 16S rRNA + S-adenosyl-L-methionine = N(4)-methylcytidine(1402) in 16S rRNA + S-adenosyl-L-homocysteine + H(+). In terms of biological role, specifically methylates the N4 position of cytidine in position 1402 (C1402) of 16S rRNA. This Mesorhizobium japonicum (strain LMG 29417 / CECT 9101 / MAFF 303099) (Mesorhizobium loti (strain MAFF 303099)) protein is Ribosomal RNA small subunit methyltransferase H.